A 264-amino-acid polypeptide reads, in one-letter code: MNTLGHRARKRFGQHFLHDKGVIERLLRAINPQLNDLMVEIGPGQGALTLPLLHCLGHLEAIELDRDLAAYLVERCASEGNLRLHNVDSLTFDFRTLAHENRRLRVVGNLPYNISTPLLFHLLGQIGILEDMHFMLQREVVTRLAAKPGGKDYGRLSVMVQFYCEVEPLFTVKSGAFVPPPKVDSMVVRLIPHRPSLAPNISHGALNRVVSQAFSQRRKTLANALKGLLSSAELIALGIDPRQRPETISLEDYLALTRYWLKAQ.

Residues histidine 15, leucine 17, glycine 42, glutamate 63, aspartate 88, and asparagine 109 each contribute to the S-adenosyl-L-methionine site.

Belongs to the class I-like SAM-binding methyltransferase superfamily. rRNA adenine N(6)-methyltransferase family. RsmA subfamily.

Its subcellular location is the cytoplasm. The enzyme catalyses adenosine(1518)/adenosine(1519) in 16S rRNA + 4 S-adenosyl-L-methionine = N(6)-dimethyladenosine(1518)/N(6)-dimethyladenosine(1519) in 16S rRNA + 4 S-adenosyl-L-homocysteine + 4 H(+). In terms of biological role, specifically dimethylates two adjacent adenosines (A1518 and A1519) in the loop of a conserved hairpin near the 3'-end of 16S rRNA in the 30S particle. May play a critical role in biogenesis of 30S subunits. The protein is Ribosomal RNA small subunit methyltransferase A of Nitrosococcus oceani (strain ATCC 19707 / BCRC 17464 / JCM 30415 / NCIMB 11848 / C-107).